Here is a 190-residue protein sequence, read N- to C-terminus: Lysozyme g (190 aa).

A compositionally biased stretch (basic and acidic residues) spans 1–10; the sequence is MPYGKIEDIK. Residues 1-31 are disordered; sequence MPYGKIEDIKTSGASDVTAAQDGLKEGGWKS. Catalysis depends on residues Glu71 and Asp84.

It belongs to the glycosyl hydrolase 23 family.

The enzyme catalyses Hydrolysis of (1-&gt;4)-beta-linkages between N-acetylmuramic acid and N-acetyl-D-glucosamine residues in a peptidoglycan and between N-acetyl-D-glucosamine residues in chitodextrins.. The protein is Lysozyme g of Takifugu rubripes (Japanese pufferfish).